A 502-amino-acid chain; its full sequence is ATP synthase subunit alpha (502 aa).

The disordered stretch occupies residues 115–135; it reads VDGLGPINTTNTRPIESPAPG. 169–176 lines the ATP pocket; sequence GDRQTGKT.

This sequence belongs to the ATPase alpha/beta chains family. In terms of assembly, F-type ATPases have 2 components, CF(1) - the catalytic core - and CF(0) - the membrane proton channel. CF(1) has five subunits: alpha(3), beta(3), gamma(1), delta(1), epsilon(1). CF(0) has three main subunits: a(1), b(2) and c(9-12). The alpha and beta chains form an alternating ring which encloses part of the gamma chain. CF(1) is attached to CF(0) by a central stalk formed by the gamma and epsilon chains, while a peripheral stalk is formed by the delta and b chains.

Its subcellular location is the cell membrane. It catalyses the reaction ATP + H2O + 4 H(+)(in) = ADP + phosphate + 5 H(+)(out). Functionally, produces ATP from ADP in the presence of a proton gradient across the membrane. The alpha chain is a regulatory subunit. The protein is ATP synthase subunit alpha of Bacillus cereus (strain B4264).